A 260-amino-acid chain; its full sequence is Small ribosomal subunit protein uS2 (260 aa).

Belongs to the universal ribosomal protein uS2 family.

The sequence is that of Small ribosomal subunit protein uS2 from Gluconacetobacter diazotrophicus (strain ATCC 49037 / DSM 5601 / CCUG 37298 / CIP 103539 / LMG 7603 / PAl5).